We begin with the raw amino-acid sequence, 395 residues long: Homoserine O-acetyltransferase (395 aa).

In terms of domain architecture, AB hydrolase-1 spans 65 to 363 (PIVLIEHALT…SPTGHDGFLI (299 aa)). The active-site Nucleophile is the serine 160. Arginine 230 provides a ligand contact to substrate. Residues aspartate 328 and histidine 358 contribute to the active site. Position 359 (aspartate 359) interacts with substrate.

This sequence belongs to the AB hydrolase superfamily. MetX family. As to quaternary structure, homodimer.

The protein localises to the cytoplasm. The enzyme catalyses L-homoserine + acetyl-CoA = O-acetyl-L-homoserine + CoA. It functions in the pathway amino-acid biosynthesis; L-methionine biosynthesis via de novo pathway; O-acetyl-L-homoserine from L-homoserine: step 1/1. Functionally, transfers an acetyl group from acetyl-CoA to L-homoserine, forming acetyl-L-homoserine. This chain is Homoserine O-acetyltransferase, found in Corynebacterium jeikeium (strain K411).